The following is a 564-amino-acid chain: 60 kDa lysophospholipase (564 aa).

Positions 9–355 constitute an Asparaginase/glutaminase domain; the sequence is RRLLAIYTGG…NDRKKLLAKD (347 aa). Residue Thr19 is the Acyl-ester intermediate of the active site. The asparaginase stretch occupies residues 41–350; that stretch reads TLHMFHDEEY…PGLSLNDRKK (310 aa). Substrate-binding positions include 84 to 86 and 116 to 117; these read DSS and TD. ANK repeat units lie at residues 141 to 170, 396 to 426, 430 to 459, 463 to 492, and 530 to 559; these read GAQVPIHALWSDGRENLLGALLMAGQYVIP, VLLPGLALAAAHAGDLDTLQAFVELDRDLNL, SGQTPLHVAARRGHAAVVTMLLQRGADVDA, DGQSPLLLAVRGRHQSVIGLLRAAGARLSP, and DGHCALQVAEAAGNADVVALLQSFKDSVCA. At Ser478 the chain carries Phosphoserine.

It in the N-terminal section; belongs to the asparaginase 1 family. As to quaternary structure, monomer.

It catalyses the reaction a 1-acyl-sn-glycero-3-phosphocholine + H2O = sn-glycerol 3-phosphocholine + a fatty acid + H(+). The catalysed reaction is L-asparagine + H2O = L-aspartate + NH4(+). It carries out the reaction a 1-O-alkyl-2-acetyl-sn-glycero-3-phosphocholine + H2O = a 1-O-alkyl-sn-glycero-3-phosphocholine + acetate + H(+). The enzyme catalyses 1-hexadecanoyl-sn-glycero-3-phosphocholine + H2O = sn-glycerol 3-phosphocholine + hexadecanoate + H(+). It catalyses the reaction 2 1-hexadecanoyl-sn-glycero-3-phosphocholine = 1,2-dihexadecanoyl-sn-glycero-3-phosphocholine + sn-glycerol 3-phosphocholine. The catalysed reaction is 1-octadecanoyl-sn-glycero-3-phosphocholine + H2O = octadecanoate + sn-glycerol 3-phosphocholine + H(+). It carries out the reaction 1-(9Z-octadecenoyl)-sn-glycero-3-phosphocholine + H2O = sn-glycerol 3-phosphocholine + (9Z)-octadecenoate + H(+). The enzyme catalyses 1-hexadecanoyl-sn-glycero-3-phosphoethanolamine + H2O = sn-glycero-3-phosphoethanolamine + hexadecanoate + H(+). It catalyses the reaction 1-(9Z-octadecenoyl)-sn-glycero-3-phosphoethanolamine + H2O = sn-glycero-3-phosphoethanolamine + (9Z)-octadecenoate + H(+). The catalysed reaction is 1-hexadecanoyl-sn-glycero-3-phosphoethanolamine + 1-hexadecanoyl-sn-glycero-3-phosphocholine = 1,2-dihexadecanoyl-sn-glycero-3-phosphoethanolamine + sn-glycerol 3-phosphocholine. It carries out the reaction 2-(5Z,8Z,11Z,14Z)-eicosatetraenoyl-sn-glycero-3-phosphocholine + H2O = sn-glycerol 3-phosphocholine + (5Z,8Z,11Z,14Z)-eicosatetraenoate + H(+). The enzyme catalyses 2-hexadecanoyl-sn-glycero-3-phosphocholine + H2O = sn-glycerol 3-phosphocholine + hexadecanoate + H(+). It catalyses the reaction 2 2-hexadecanoyl-sn-glycero-3-phosphocholine = 1,2-dihexadecanoyl-sn-glycero-3-phosphocholine + sn-glycerol 3-phosphocholine. The catalysed reaction is 1-O-(9Z)-octadecenoyl-2-O-acetyl-sn-glycero-3-phosphocholine + H2O = 2-acetyl-sn-glycero-3-phosphocholine + (9Z)-octadecenoate + H(+). It carries out the reaction a 1-acyl-sn-glycero-3-phospho-(1D-myo-inositol) + 1-hexadecanoyl-sn-glycero-3-phosphocholine = a 1-acyl-2-hexadecanoyl-sn-glycero-3-phospho-(1D-myo-inositol) + sn-glycerol 3-phosphocholine. The enzyme catalyses 2 2-(5Z,8Z,11Z,14Z)-eicosatetraenoyl-sn-glycero-3-phosphocholine = 1,2-di-(5Z,8Z,11Z,14Z-eicosatetraenoyl)-sn-glycero-3-phosphocholine + sn-glycerol 3-phosphocholine. In terms of biological role, exhibits lysophospholipase, transacylase, PAF acetylhydrolase and asparaginase activities. Can catalyze three types of transacylation reactions: (1) acyl transfer from 1-acyl-sn-glycero-3-phosphocholine (1-acyl-GPC) to the sn-1(3) positions of glycerol and 2-acylglycerol (sn-1 to -1(3) transfer), (2) acyl transfer from 1-acyl-GPC to the sn-2 positions of 1-acyl-GPC, 1-acyl-sn-glycero-3-phosphoethanolamine (1-acyl-GPE), and other lysophospholipids (sn-1 to -2 transfer) and (3) acyl transfer from 2-acyl-GPC to the sn-1 position of 2-acyl-GPC and 2-acyl-GPE (sn-2 to -1 transfer). Mediates the synthesis of 1-arachidonoyl species of phospholipids by transferring the arachidonoyl residue from 2-arachidonoyl lysophospholipid to the sn-1 position of 2-acyl lysophospholipid. This is 60 kDa lysophospholipase (Aspg) from Mus musculus (Mouse).